The chain runs to 308 residues: Taste receptor type 2 member 107 (308 aa).

Residues 1 to 7 (MLNSAEG) lie on the Extracellular side of the membrane. The chain crosses the membrane as a helical span at residues 8 to 28 (ILLCVVTSEAVLGVLGDTYIA). Over 29–43 (LFNCMDYAKNKKLSK) the chain is Cytoplasmic. A helical transmembrane segment spans residues 44 to 64 (IGFILIGLAISRIGVVWIIIL). Residues 65–87 (QGYIQVFFPHMLTSGNITEYITY) lie on the Extracellular side of the membrane. An N-linked (GlcNAc...) asparagine glycan is attached at Asn80. A helical membrane pass occupies residues 88–108 (IWVFLNHLSVWFVTNLNILYF). Residues 109–125 (LKIANFSNSVFLWLKRR) are Cytoplasmic-facing. The chain crosses the membrane as a helical span at residues 126–146 (VNAVFIFLSGCLLTSWLLCFP). Residues 147–180 (QMTKILQNSKMHQRNTSWVHQRKNYFLINQSVTN) are Extracellular-facing. N-linked (GlcNAc...) asparagine glycosylation is found at Asn161 and Asn175. A helical membrane pass occupies residues 181-201 (LGIFFFIIVSLITCFLLIVFL). Residues 202-232 (WRHVRQMHSDVSGFRDHSTKVHVKAMKFLIS) are Cytoplasmic-facing. A helical transmembrane segment spans residues 233–253 (FMVFFILHFVGLSIEVLCFIL). The Extracellular segment spans residues 254-258 (PQNKL). Residues 259–279 (LFITGLTATCLYPCGHSIIVI) form a helical membrane-spanning segment. Residues 280-308 (LGNKQLKQASLKALQQLKCCETKGNFRVK) lie on the Cytoplasmic side of the membrane.

Belongs to the G-protein coupled receptor T2R family.

Its subcellular location is the membrane. Functionally, putative taste receptor which may play a role in the perception of bitterness. The sequence is that of Taste receptor type 2 member 107 from Mus musculus (Mouse).